The following is a 487-amino-acid chain: MESHVVHNAQKPHVVCVPYPAQGHINPMLKVAKLLYAKGFHVTFVNTLYNHNRLLRSRGPNALDGFPSFRFESIPDGLPETDGDRTQHTPTVCMSIEKNCLAPFKEILRRINDKDDVPPVSCIVSDGVMSFTLDAAEELGVPEVIFWTNSACGFMTILHFYLFIEKGLSPFKDESYMSKEHLDTVIDWIPSMKNLRLKDIPSYIRTTNPDNIMLNFLIREVERSKRASAIILNTFDELEHDVIQSMQSILPPVYSIGPLHLLVKEEINEASEIGQMGLNLWREEMECLDWLDTKTPNSVLFVNFGCITVMSAKQLEEFAWGLAASRKEFLWVIRPNLVVGEAMVVLPQEFLAETIDRRMLASWCPQEKVLSHPAIGGFLTHCGWNSTLESLAGGVPMICWPCFSEQPTNCKFCCDEWGVGIEIGKDVKREEVETVVRELMDGEKGKKLREKAEEWRRLAEEATRYKHGSSVMNLETLIHKVFLENLR.

UDP-alpha-D-glucose-binding positions include 364 to 366, 381 to 389, and 403 to 406; these read CPQ, HCGWNSTLE, and FSEQ.

It belongs to the UDP-glycosyltransferase family. As to expression, expressed in roots, shoots, leaves and flowers.

The chain is UDP-glycosyltransferase 85A7 (UGT85A7) from Arabidopsis thaliana (Mouse-ear cress).